The primary structure comprises 720 residues: Pro-neuregulin-3, membrane-bound isoform (720 aa).

Over 1–360 the chain is Extracellular; the sequence is MSEGAAAASP…MESEEVYQRQ (360 aa). Disordered regions lie at residues 28–48, 119–223, and 246–280; these read AAAAAAAGGGPDGGGEGAAEP, SSFP…AMPS, and PFQDAASSSSSSSSSATTTTPETSTSPKFHTTTYS. Residues 34 to 44 are compositionally biased toward gly residues; sequence AGGGPDGGGEG. A compositionally biased stretch (low complexity) spans 127 to 148; the sequence is TTTTTTSTTSPATPSAGGAASS. Positions 149-163 are enriched in polar residues; that stretch reads RTPNRISTRLTTITR. 2 stretches are compositionally biased toward low complexity: residues 187 to 205 and 250 to 271; these read TAAPATVPSTTAPFFSSST and AASSSSSSSSSATTTTPETSTS. The EGF-like domain maps to 286–329; the sequence is HFKPCRDKDLAYCLNDGECFVIETLTGSHKHCRCKEGYQGVRCD. Cystine bridges form between Cys290/Cys304, Cys298/Cys317, and Cys319/Cys328. A helical transmembrane segment spans residues 361 to 381; that stretch reads VLSISCIIFGIVIVGMFCAAF. Over 382–720 the chain is Cytoplasmic; that stretch reads YFKSKKQAKQ…EIQRDSALTK (339 aa). The tract at residues 451–481 is disordered; it reads PQSFPEVPSPDRGSQSVKHHRSLSSCCSPGQ.

This sequence belongs to the neuregulin family. As to quaternary structure, interacts with ERBB4. Post-translationally, proteolytic cleavage close to the plasma membrane on the external face leads to the release of the soluble growth factor form. Extensive glycosylation precedes the proteolytic cleavage. Isoform 3 is glycosylated. As to expression, highly expressed in most regions of the brain with the exception of corpus callosum. Expressed at lower level in testis. Not detected in heart, placenta, lung, liver, skeletal muscle, kidney, pancreas, spleen, thymus, prostate, ovary, small intestine, colon and peripheral blood leukocytes.

Its subcellular location is the cell membrane. The protein resides in the secreted. In terms of biological role, direct ligand for the ERBB4 tyrosine kinase receptor. Binding results in ligand-stimulated tyrosine phosphorylation and activation of the receptor. Does not bind to the EGF receptor, ERBB2 or ERBB3 receptors. May be a survival factor for oligodendrocytes. The polypeptide is Pro-neuregulin-3, membrane-bound isoform (NRG3) (Homo sapiens (Human)).